The chain runs to 155 residues: Dau c 1 isoallergen Dau c 1.0401 (155 aa).

Belongs to the BetVI family. Monomer. As to expression, expressed in roots (at protein level). Expressed in roots.

This Daucus carota subsp. sativus (Carrot) protein is Dau c 1 isoallergen Dau c 1.0401.